The sequence spans 483 residues: CBL-interacting serine/threonine-protein kinase 19 (483 aa).

The Protein kinase domain occupies 28-282 (YEMGRLLGHG…MPDIMETSWF (255 aa)). ATP contacts are provided by residues 34–42 (LGHGTFAKV) and Lys-57. Asp-150 functions as the Proton acceptor in the catalytic mechanism. The activation loop stretch occupies residues 168 to 197 (DFGLSAVSDQIRQDGLFHTFCGTPAYVAPE). The residue at position 172 (Ser-172) is a Phosphoserine. Thr-186 is subject to Phosphothreonine. Polar residues predominate over residues 313 to 322 (SVSGRSSTVS). Positions 313–338 (SVSGRSSTVSEPEDFESFDGRRRGGS) are disordered. Positions 340–364 (PRPASLNAFDLISFSPGFDLSGLFE) constitute an NAF domain. The segment at 367-396 (GEGSRFVSGAPVGQIISKLEEIARIVSFTV) is PPI. A disordered region spans residues 459–483 (NLSSENGQRVSGSRSLPSFLLSDTD).

This sequence belongs to the protein kinase superfamily. CAMK Ser/Thr protein kinase family. SNF1 subfamily. Mn(2+) is required as a cofactor.

It carries out the reaction L-seryl-[protein] + ATP = O-phospho-L-seryl-[protein] + ADP + H(+). The catalysed reaction is L-threonyl-[protein] + ATP = O-phospho-L-threonyl-[protein] + ADP + H(+). CIPK serine-threonine protein kinases interact with CBL proteins. Binding of a CBL protein to the regulatory NAF domain of CIPK protein lead to the activation of the kinase in a calcium-dependent manner. This is CBL-interacting serine/threonine-protein kinase 19 (CIPK19) from Arabidopsis thaliana (Mouse-ear cress).